The following is a 376-amino-acid chain: Chaperone protein DnaJ (376 aa).

The J domain maps to 5–70; sequence DYYEVLGLSK…QKKANYDQFG (66 aa). The CR-type zinc-finger motif lies at 133–215; it reads GVEKEISITR…CHGKGTVRKN (83 aa). Zn(2+)-binding residues include cysteine 146, cysteine 149, cysteine 163, cysteine 166, cysteine 189, cysteine 192, cysteine 203, and cysteine 206. 4 CXXCXGXG motif repeats span residues 146–153, 163–170, 189–196, and 203–210; these read CDTCAGSG, CDKCGGTG, CDKCGGSG, and CTTCHGKG.

The protein belongs to the DnaJ family. Homodimer. Zn(2+) is required as a cofactor.

It is found in the cytoplasm. Functionally, participates actively in the response to hyperosmotic and heat shock by preventing the aggregation of stress-denatured proteins and by disaggregating proteins, also in an autonomous, DnaK-independent fashion. Unfolded proteins bind initially to DnaJ; upon interaction with the DnaJ-bound protein, DnaK hydrolyzes its bound ATP, resulting in the formation of a stable complex. GrpE releases ADP from DnaK; ATP binding to DnaK triggers the release of the substrate protein, thus completing the reaction cycle. Several rounds of ATP-dependent interactions between DnaJ, DnaK and GrpE are required for fully efficient folding. Also involved, together with DnaK and GrpE, in the DNA replication of plasmids through activation of initiation proteins. The polypeptide is Chaperone protein DnaJ (Clostridium novyi (strain NT)).